The sequence spans 293 residues: 4-diphosphocytidyl-2-C-methyl-D-erythritol kinase (293 aa).

Residue Lys-16 is part of the active site. 99 to 109 (PMGAGLGGGSS) contributes to the ATP binding site. Asp-141 is a catalytic residue.

It belongs to the GHMP kinase family. IspE subfamily.

It catalyses the reaction 4-CDP-2-C-methyl-D-erythritol + ATP = 4-CDP-2-C-methyl-D-erythritol 2-phosphate + ADP + H(+). Its pathway is isoprenoid biosynthesis; isopentenyl diphosphate biosynthesis via DXP pathway; isopentenyl diphosphate from 1-deoxy-D-xylulose 5-phosphate: step 3/6. Functionally, catalyzes the phosphorylation of the position 2 hydroxy group of 4-diphosphocytidyl-2C-methyl-D-erythritol. The chain is 4-diphosphocytidyl-2-C-methyl-D-erythritol kinase from Burkholderia lata (strain ATCC 17760 / DSM 23089 / LMG 22485 / NCIMB 9086 / R18194 / 383).